Consider the following 83-residue polypeptide: uncharacterized protein (83 aa).

Transmembrane regions (helical) follow at residues 4-24 (AILSNYLYYPSILAFLFGVLM), 32-52 (IGNIFGYLILTVVIAYFLKAF), and 54-74 (YYDLLPLSCSYLSAVIGIIIG).

It localises to the cell membrane. This is an uncharacterized protein from Methanocaldococcus jannaschii (strain ATCC 43067 / DSM 2661 / JAL-1 / JCM 10045 / NBRC 100440) (Methanococcus jannaschii).